The chain runs to 94 residues: Preprofallaxidin-9 (94 aa).

The signal sequence occupies residues M1–C22. Positions E23 to R46 are excised as a propeptide. Residues R27–R46 are disordered. A compositionally biased stretch (acidic residues) spans E30 to S42. Residue L62 is modified to Leucine amide. The propeptide occupies S66–R70. M75 is subject to Methionine amide. Residues S79–R83 constitute a propeptide that is removed on maturation. M88 is subject to Methionine amide. Residues S92 to E94 constitute a propeptide that is removed on maturation.

This sequence belongs to the frog skin active peptide (FSAP) family. Brevinin subfamily. Expressed by the skin glands.

Its subcellular location is the secreted. Its function is as follows. Fallaxidin-1.3 shows no antibacterial activity against Gram-positive or Gram-negative bacteria. Does not inhibit the formation of NO by neuronal nitric oxide synthase. Has no effect on splenocyte proliferation or smooth muscle contraction. Fallaxidin-3.2 shows antibacterial activity against the Gram-positive bacteria E.faecalis (MIC=100 uM) and L.lactis (MIC=500 uM). No antibacterial activity against the Gram-positive bacteria B.cereus, L.innocua, M.luteus, S.epidermidis, S.uberis and S.aureus, or the Gram-negative bacteria E.cloacae and E.coli. This chain is Preprofallaxidin-9, found in Litoria fallax (Eastern dwarf tree frog).